Here is a 271-residue protein sequence, read N- to C-terminus: Elongation factor Ts (271 aa).

The tract at residues 76 to 79 (TDFV) is involved in Mg(2+) ion dislocation from EF-Tu.

It belongs to the EF-Ts family.

The protein localises to the cytoplasm. Its function is as follows. Associates with the EF-Tu.GDP complex and induces the exchange of GDP to GTP. It remains bound to the aminoacyl-tRNA.EF-Tu.GTP complex up to the GTP hydrolysis stage on the ribosome. The protein is Elongation factor Ts of Mycobacterium bovis (strain BCG / Pasteur 1173P2).